A 341-amino-acid chain; its full sequence is Methionine import ATP-binding protein MetN 2 (341 aa).

An ABC transporter domain is found at 2-241 (INLQNVSKIY…PKEEMTKRFV (240 aa)). 38 to 45 (GYSGAGKS) contacts ATP.

This sequence belongs to the ABC transporter superfamily. Methionine importer (TC 3.A.1.24) family. The complex is composed of two ATP-binding proteins (MetN), two transmembrane proteins (MetI) and a solute-binding protein (MetQ).

It is found in the cell membrane. It carries out the reaction L-methionine(out) + ATP + H2O = L-methionine(in) + ADP + phosphate + H(+). The catalysed reaction is D-methionine(out) + ATP + H2O = D-methionine(in) + ADP + phosphate + H(+). Functionally, part of the ABC transporter complex MetNIQ involved in methionine import. Responsible for energy coupling to the transport system. This Bacillus licheniformis (strain ATCC 14580 / DSM 13 / JCM 2505 / CCUG 7422 / NBRC 12200 / NCIMB 9375 / NCTC 10341 / NRRL NRS-1264 / Gibson 46) protein is Methionine import ATP-binding protein MetN 2.